A 314-amino-acid chain; its full sequence is Acetyl-coenzyme A carboxylase carboxyl transferase subunit alpha (314 aa).

One can recognise a CoA carboxyltransferase C-terminal domain in the interval 32 to 289; the sequence is EIDMLEASLE…KSAFVAQLDS (258 aa).

It belongs to the AccA family. In terms of assembly, acetyl-CoA carboxylase is a heterohexamer composed of biotin carboxyl carrier protein (AccB), biotin carboxylase (AccC) and two subunits each of ACCase subunit alpha (AccA) and ACCase subunit beta (AccD).

It is found in the cytoplasm. The enzyme catalyses N(6)-carboxybiotinyl-L-lysyl-[protein] + acetyl-CoA = N(6)-biotinyl-L-lysyl-[protein] + malonyl-CoA. The protein operates within lipid metabolism; malonyl-CoA biosynthesis; malonyl-CoA from acetyl-CoA: step 1/1. Its function is as follows. Component of the acetyl coenzyme A carboxylase (ACC) complex. First, biotin carboxylase catalyzes the carboxylation of biotin on its carrier protein (BCCP) and then the CO(2) group is transferred by the carboxyltransferase to acetyl-CoA to form malonyl-CoA. The protein is Acetyl-coenzyme A carboxylase carboxyl transferase subunit alpha of Staphylococcus aureus (strain NCTC 8325 / PS 47).